The following is a 193-amino-acid chain: Peptidyl-tRNA hydrolase (193 aa).

A tRNA-binding site is contributed by His17. His22 serves as the catalytic Proton acceptor. The tRNA site is built by Phe68, Asn70, and Asn116.

It belongs to the PTH family. Monomer.

It localises to the cytoplasm. The enzyme catalyses an N-acyl-L-alpha-aminoacyl-tRNA + H2O = an N-acyl-L-amino acid + a tRNA + H(+). In terms of biological role, hydrolyzes ribosome-free peptidyl-tRNAs (with 1 or more amino acids incorporated), which drop off the ribosome during protein synthesis, or as a result of ribosome stalling. Functionally, catalyzes the release of premature peptidyl moieties from peptidyl-tRNA molecules trapped in stalled 50S ribosomal subunits, and thus maintains levels of free tRNAs and 50S ribosomes. The chain is Peptidyl-tRNA hydrolase from Xanthomonas euvesicatoria pv. vesicatoria (strain 85-10) (Xanthomonas campestris pv. vesicatoria).